The chain runs to 279 residues: Tryptophan synthase alpha chain (279 aa).

Active-site proton acceptor residues include Glu50 and Asp61.

This sequence belongs to the TrpA family. In terms of assembly, tetramer of two alpha and two beta chains.

The catalysed reaction is (1S,2R)-1-C-(indol-3-yl)glycerol 3-phosphate + L-serine = D-glyceraldehyde 3-phosphate + L-tryptophan + H2O. It participates in amino-acid biosynthesis; L-tryptophan biosynthesis; L-tryptophan from chorismate: step 5/5. In terms of biological role, the alpha subunit is responsible for the aldol cleavage of indoleglycerol phosphate to indole and glyceraldehyde 3-phosphate. The protein is Tryptophan synthase alpha chain of Rhizobium meliloti (strain 1021) (Ensifer meliloti).